The primary structure comprises 98 residues: Aspartyl/glutamyl-tRNA(Asn/Gln) amidotransferase subunit C (98 aa).

It belongs to the GatC family. Heterotrimer of A, B and C subunits.

It catalyses the reaction L-glutamyl-tRNA(Gln) + L-glutamine + ATP + H2O = L-glutaminyl-tRNA(Gln) + L-glutamate + ADP + phosphate + H(+). It carries out the reaction L-aspartyl-tRNA(Asn) + L-glutamine + ATP + H2O = L-asparaginyl-tRNA(Asn) + L-glutamate + ADP + phosphate + 2 H(+). In terms of biological role, allows the formation of correctly charged Asn-tRNA(Asn) or Gln-tRNA(Gln) through the transamidation of misacylated Asp-tRNA(Asn) or Glu-tRNA(Gln) in organisms which lack either or both of asparaginyl-tRNA or glutaminyl-tRNA synthetases. The reaction takes place in the presence of glutamine and ATP through an activated phospho-Asp-tRNA(Asn) or phospho-Glu-tRNA(Gln). The protein is Aspartyl/glutamyl-tRNA(Asn/Gln) amidotransferase subunit C of Arthrobacter sp. (strain FB24).